Reading from the N-terminus, the 506-residue chain is NAD(P)H-quinone oxidoreductase subunit 2, chloroplastic (506 aa).

The next 13 membrane-spanning stretches (helical) occupy residues 15 to 35, 39 to 59, 84 to 104, 113 to 133, 137 to 157, 172 to 192, 217 to 237, 249 to 269, 283 to 303, 339 to 359, 382 to 402, 418 to 438, and 471 to 491; these read LIPE…DLVY, CHAW…VLLG, LSLV…LLSI, APSE…LVAG, LLMM…LTGY, LLVG…MYGI, CALA…AAPF, PTPV…ILAV, WHLI…FIAV, IVYL…VILF, ALCL…AGFF, SLVW…LSVV, and VGIF…NSMV.

It belongs to the complex I subunit 2 family. In terms of assembly, NDH is composed of at least 16 different subunits, 5 of which are encoded in the nucleus.

The protein localises to the plastid. It localises to the chloroplast thylakoid membrane. It catalyses the reaction a plastoquinone + NADH + (n+1) H(+)(in) = a plastoquinol + NAD(+) + n H(+)(out). The enzyme catalyses a plastoquinone + NADPH + (n+1) H(+)(in) = a plastoquinol + NADP(+) + n H(+)(out). NDH shuttles electrons from NAD(P)H:plastoquinone, via FMN and iron-sulfur (Fe-S) centers, to quinones in the photosynthetic chain and possibly in a chloroplast respiratory chain. The immediate electron acceptor for the enzyme in this species is believed to be plastoquinone. Couples the redox reaction to proton translocation, and thus conserves the redox energy in a proton gradient. The polypeptide is NAD(P)H-quinone oxidoreductase subunit 2, chloroplastic (Nephroselmis olivacea (Green alga)).